The chain runs to 336 residues: NADH-cytochrome b5 reductase 2 (336 aa).

The helical transmembrane segment at 28 to 50 (GGSSNGALYVGIGAAGLAGAYIY) threads the bilayer. The 106-residue stretch at 84–189 (QGFISLLLDK…KGPIPKYPWS (106 aa)) folds into the FAD-binding FR-type domain. 192–227 (KHEHIALIAGGTGITPMWQTARAIFKNPEDKTKVTL) contacts FAD.

Belongs to the flavoprotein pyridine nucleotide cytochrome reductase family. FAD serves as cofactor.

Its subcellular location is the mitochondrion outer membrane. The enzyme catalyses 2 Fe(III)-[cytochrome b5] + NADH = 2 Fe(II)-[cytochrome b5] + NAD(+) + H(+). Functionally, may mediate the reduction of outer membrane cytochrome b5. The chain is NADH-cytochrome b5 reductase 2 (MCR1) from Phaeosphaeria nodorum (strain SN15 / ATCC MYA-4574 / FGSC 10173) (Glume blotch fungus).